The primary structure comprises 459 residues: tRNA modification GTPase MnmE (459 aa).

Positions 23, 88, and 127 each coordinate (6S)-5-formyl-5,6,7,8-tetrahydrofolate. The TrmE-type G domain maps to 223-381 (GLDVVIVGKP…LKEYIKDLFF (159 aa)). Asn-233 serves as a coordination point for K(+). GTP-binding positions include 233-238 (NVGKSS), 252-258 (TEIPGTT), and 277-280 (DTAG). Ser-237 contributes to the Mg(2+) binding site. K(+)-binding residues include Thr-252, Ile-254, and Thr-257. Residue Thr-258 participates in Mg(2+) binding. Lys-459 provides a ligand contact to (6S)-5-formyl-5,6,7,8-tetrahydrofolate.

This sequence belongs to the TRAFAC class TrmE-Era-EngA-EngB-Septin-like GTPase superfamily. TrmE GTPase family. In terms of assembly, homodimer. Heterotetramer of two MnmE and two MnmG subunits. K(+) serves as cofactor.

It localises to the cytoplasm. Exhibits a very high intrinsic GTPase hydrolysis rate. Involved in the addition of a carboxymethylaminomethyl (cmnm) group at the wobble position (U34) of certain tRNAs, forming tRNA-cmnm(5)s(2)U34. The polypeptide is tRNA modification GTPase MnmE (Clostridium tetani (strain Massachusetts / E88)).